Reading from the N-terminus, the 407-residue chain is Pyridinium-3,5-bisthiocarboxylic acid mononucleotide nickel insertion protein (407 aa).

This sequence belongs to the LarC family.

The enzyme catalyses Ni(II)-pyridinium-3,5-bisthiocarboxylate mononucleotide = pyridinium-3,5-bisthiocarboxylate mononucleotide + Ni(2+). Functionally, involved in the biosynthesis of a nickel-pincer cofactor ((SCS)Ni(II) pincer complex). Binds Ni(2+), and functions in nickel delivery to pyridinium-3,5-bisthiocarboxylic acid mononucleotide (P2TMN), to form the mature cofactor. Is thus probably required for the activation of nickel-pincer cofactor-dependent enzymes. The polypeptide is Pyridinium-3,5-bisthiocarboxylic acid mononucleotide nickel insertion protein (Acetivibrio thermocellus (strain ATCC 27405 / DSM 1237 / JCM 9322 / NBRC 103400 / NCIMB 10682 / NRRL B-4536 / VPI 7372) (Clostridium thermocellum)).